The following is a 574-amino-acid chain: Septation ring formation regulator EzrA (574 aa).

Topologically, residues 1–7 (MPTGTII) are extracellular. The helical transmembrane segment at 8 to 26 (LIVSIVIILIIAYVACLIV) threads the bilayer. The Cytoplasmic segment spans residues 27–574 (RKRNDNLLVA…YEKTREAIRY (548 aa)). Residues 105–189 (SAKNAIDSID…IEVEFSEFVM (85 aa)) are a coiled coil.

The protein belongs to the EzrA family.

The protein localises to the cell membrane. Negative regulator of FtsZ ring formation; modulates the frequency and position of FtsZ ring formation. Inhibits FtsZ ring formation at polar sites. Interacts either with FtsZ or with one of its binding partners to promote depolymerization. This chain is Septation ring formation regulator EzrA, found in Streptococcus suis (strain 98HAH33).